We begin with the raw amino-acid sequence, 236 residues long: MAKKQEFTFKQFHINQDQCAMKVGTDGILLGAWANINQANTLLDLGTGTGLIALMLAQRSPEHCHISAVELDPQAYLQAKDNIQQSPWANKIKIFQQDIIVFAQDCEHKFDVITANPPYFKQGIDCASKQRNLARYTLTQSHLDWLNAAEKLLNLTGEIHLILPFEEGKSLQKKCGLFCIRECKIITKAGKTPQRLLLSFSREERKCEESQLVIYDRNNQYSTEFKTLTQDFYLNF.

The protein belongs to the methyltransferase superfamily. tRNA (adenine-N(6)-)-methyltransferase family.

It is found in the cytoplasm. It carries out the reaction adenosine(37) in tRNA1(Val) + S-adenosyl-L-methionine = N(6)-methyladenosine(37) in tRNA1(Val) + S-adenosyl-L-homocysteine + H(+). Its function is as follows. Specifically methylates the adenine in position 37 of tRNA(1)(Val) (anticodon cmo5UAC). This chain is tRNA1(Val) (adenine(37)-N6)-methyltransferase, found in Histophilus somni (strain 129Pt) (Haemophilus somnus).